Here is a 203-residue protein sequence, read N- to C-terminus: N-(5'-phosphoribosyl)anthranilate isomerase (203 aa).

The protein belongs to the TrpF family.

It carries out the reaction N-(5-phospho-beta-D-ribosyl)anthranilate = 1-(2-carboxyphenylamino)-1-deoxy-D-ribulose 5-phosphate. Its pathway is amino-acid biosynthesis; L-tryptophan biosynthesis; L-tryptophan from chorismate: step 3/5. The protein is N-(5'-phosphoribosyl)anthranilate isomerase of Thermoanaerobacter sp. (strain X514).